The chain runs to 154 residues: Large ribosomal subunit protein uL13 (154 aa).

This sequence belongs to the universal ribosomal protein uL13 family. In terms of assembly, part of the 50S ribosomal subunit.

In terms of biological role, this protein is one of the early assembly proteins of the 50S ribosomal subunit, although it is not seen to bind rRNA by itself. It is important during the early stages of 50S assembly. The sequence is that of Large ribosomal subunit protein uL13 from Borrelia garinii subsp. bavariensis (strain ATCC BAA-2496 / DSM 23469 / PBi) (Borreliella bavariensis).